The following is a 348-amino-acid chain: Thioredoxin-related protein DsbJ (348 aa).

A signal peptide spans 1–32 (MILLQNIKRCSLKQLKVLATLLLSLSLPTLEA).

Its subcellular location is the periplasm. This Chlamydia pneumoniae (Chlamydophila pneumoniae) protein is Thioredoxin-related protein DsbJ (dsbJ).